The sequence spans 358 residues: Fructose-bisphosphate aldolase 5, cytosolic (358 aa).

An N-acetylserine modification is found at S2. Residue R39 participates in substrate binding. C68 carries the S-glutathionyl cysteine; transient modification. Position 173 is an S-glutathionyl cysteine; transient; alternate (C173). Residue C173 is modified to S-nitrosocysteine; transient; alternate. The Proton acceptor role is filled by E183. The active-site Schiff-base intermediate with dihydroxyacetone-P is K225. Residues 266–268 and R298 contribute to the substrate site; that span reads SGG. Phosphoserine is present on S350.

This sequence belongs to the class I fructose-bisphosphate aldolase family. As to quaternary structure, homotetramer. Interacts with TRX3. Post-translationally, S-glutathionylated at Cys-68 and Cys-173. In terms of processing, S-nitrosylated at Cys-173. Expressed in rosette leaves and cauline leaves.

It localises to the cytoplasm. The protein localises to the cytosol. The enzyme catalyses beta-D-fructose 1,6-bisphosphate = D-glyceraldehyde 3-phosphate + dihydroxyacetone phosphate. Its pathway is carbohydrate degradation; glycolysis; D-glyceraldehyde 3-phosphate and glycerone phosphate from D-glucose: step 4/4. Fructose-bisphosphate aldolase that plays a key role in glycolysis and gluconeogenesis. This chain is Fructose-bisphosphate aldolase 5, cytosolic, found in Arabidopsis thaliana (Mouse-ear cress).